We begin with the raw amino-acid sequence, 323 residues long: Muscleblind-like protein 3 (323 aa).

4 C3H1-type zinc fingers span residues Trp13–Arg41, Asn47–Pro73, Thr177–Glu205, and Glu213–Ala239.

The protein belongs to the muscleblind family. Expressed in fast and slow myotomal muscle, heart, liver, skin, brain and testis.

Its subcellular location is the nucleus. The protein resides in the cytoplasm. Involved in pre-mRNA alternative splicing regulation. Could inhibit terminal muscle differentiation, acting at approximately the time of myogenin induction. The chain is Muscleblind-like protein 3 (mbnl3) from Takifugu rubripes (Japanese pufferfish).